A 556-amino-acid polypeptide reads, in one-letter code: Formate--tetrahydrofolate ligase (556 aa).

ATP is bound at residue 65-72; that stretch reads TPAGEGKS.

This sequence belongs to the formate--tetrahydrofolate ligase family.

It catalyses the reaction (6S)-5,6,7,8-tetrahydrofolate + formate + ATP = (6R)-10-formyltetrahydrofolate + ADP + phosphate. Its pathway is one-carbon metabolism; tetrahydrofolate interconversion. In Streptococcus uberis (strain ATCC BAA-854 / 0140J), this protein is Formate--tetrahydrofolate ligase.